Consider the following 378-residue polypeptide: Circumsporozoite protein (378 aa).

The N-terminal stretch at 1–22 is a signal peptide; sequence MKNFNLLAVSSILLVDLFPTHC. The disordered stretch occupies residues 50–291; the sequence is AQVRQSASRG…GQGQNNEGAN (242 aa). Basic and acidic residues-rich tracts occupy residues 66–92 and 101–126; these read PKNEEGADKQKKDEKKVEPKKPRENKL and ARAEDGARAEDGARAEDGARAEDGAR. Residues 80 to 88 form a required for the binding to heparan sulfate proteoglycans (HSPGs) on the surface of host hepatocytes region; that stretch reads KKVEPKKPR. The segment at 91-95 is region I; contains the proteolytic cleavage site; it reads KLKQP. 24 repeat units span residues 99 to 104, 105 to 110, 111 to 116, 117 to 122, 123 to 128, 129 to 134, 135 to 140, 141 to 146, 147 to 152, 153 to 158, 159 to 164, 165 to 170, 171 to 176, 177 to 182, 183 to 188, 189 to 194, 195 to 200, 201 to 206, 212 to 222, 223 to 233, 234 to 244, 245 to 255, 256 to 266, and 267 to 277. Residues 99–206 are 18 X 6 AA tandem repeats of D-G-A-R-A-[EA]; sequence DGARAEDGAR…ARAADGARAE (108 aa). The span at 127–140 shows a compositional bias: low complexity; sequence AADGARAADGARAA. Residues 141-162 show a composition bias toward basic and acidic residues; sequence DGARAEDGARAEDGARAEDGAR. A compositionally biased stretch (low complexity) spans 163–200; it reads AADGARAADGARAADGARAADGARAADGARAADGARAA. The segment at 212-277 is 6 X 11 AA tandem repeats of G-N-[QR]-[AE]-G-G-Q-A-G-A-G; that stretch reads GNREGGQAGA…NRAGGQAGAG (66 aa). Residues 214–283 show a composition bias toward gly residues; it reads REGGQAGAGG…AGAGDAGAGQ (70 aa). A TSP type-1 domain is found at 304 to 356; it reads KIRSTIGVEWSPCTVTCGKGVRMRRKVSAANKKPEELDVNDLETEVCTMDKCA. Disulfide bonds link Cys316–Cys350 and Cys320–Cys355. O-linked (Fuc) threonine glycosylation is present at Thr319. Residue Cys355 is the site of GPI-anchor amidated cysteine attachment. Residues 356-378 constitute a propeptide, removed in mature form; that stretch reads AGIFNVVSNSLGLVILLVLALFN.

The protein belongs to the plasmodium circumsporozoite protein family. In terms of processing, during host cell invasion, proteolytically cleaved at the cell membrane in the region I by a papain-like cysteine protease of parasite origin. Cleavage is triggered by the sporozoite contact with highly sulfated heparan sulfate proteoglycans (HSPGs) present on the host hepatocyte cell surface. Cleavage exposes the TSP type-1 (TSR) domain and is required for productive invasion of host hepatocytes but not for adhesion to the host cell membrane. Cleavage is dispensable for sporozoite development in the oocyst, motility and for traversal of host and vector cells. Post-translationally, O-glycosylated; maybe by POFUT2.

It localises to the cell membrane. Its subcellular location is the cytoplasm. Essential sporozoite protein. In the mosquito vector, required for sporozoite development in the oocyst, migration through the vector hemolymph and entry into the vector salivary glands. In the vertebrate host, required for sporozoite migration through the host dermis and infection of host hepatocytes. Binds to highly sulfated heparan sulfate proteoglycans (HSPGs) on the surface of host hepatocytes. In terms of biological role, in the vertebrate host, binds to highly sulfated heparan sulfate proteoglycans (HSPGs) on the surface of host hepatocytes and is required for sporozoite invasion of the host hepatocytes. This Plasmodium cynomolgi (strain London) protein is Circumsporozoite protein.